Reading from the N-terminus, the 272-residue chain is Undecaprenyl-diphosphatase (272 aa).

A run of 8 helical transmembrane segments spans residues 1–21 (MSYL…FLPI), 38–58 (PGAT…VVFF), 84–104 (VRMG…GYLF), 112–132 (FRSL…LGLA), 145–165 (MTYG…VPGV), 183–203 (PVAA…SGLY), 219–239 (QTAV…AGLM), and 250–270 (FVVY…TGAI).

The protein belongs to the UppP family.

It localises to the cell membrane. The catalysed reaction is di-trans,octa-cis-undecaprenyl diphosphate + H2O = di-trans,octa-cis-undecaprenyl phosphate + phosphate + H(+). Functionally, catalyzes the dephosphorylation of undecaprenyl diphosphate (UPP). Confers resistance to bacitracin. This is Undecaprenyl-diphosphatase from Clavibacter michiganensis subsp. michiganensis (strain NCPPB 382).